A 160-amino-acid chain; its full sequence is Cyclic di-GMP-binding protein Smlt4090 (160 aa).

The 3',3'-c-di-GMP site is built by Lys-33, Lys-132, Arg-134, Asp-135, and Asp-160.

The protein belongs to the YajQ family.

Functionally, cyclic di-GMP effector that significantly contributes to virulence. Binds bis-(3',5')-cyclic diguanylate (cyclic di-GMP or c-di-GMP), an important bacterial second messenger that controls a wide range of cellular processes. The protein is Cyclic di-GMP-binding protein Smlt4090 of Stenotrophomonas maltophilia (strain K279a).